The chain runs to 316 residues: Phosphatidylinositol mannoside acyltransferase (316 aa).

His-137 acts as the Proton acceptor in catalysis. Hexadecanoyl-CoA is bound by residues His-137 and Arg-175. Glu-211 is a catalytic residue. Glu-240 is a binding site for hexadecanoyl-CoA.

It belongs to the LpxL/LpxM/LpxP family.

It is found in the cell inner membrane. It carries out the reaction a 2,6-O-bis(alpha-D-mannopyranosyl)-1-phosphatidyl-1D-myo-inositol + an acyl-CoA = a 2-O-(alpha-D-mannosyl)-6-O-(6-O-acyl-alpha-D-mannosyl)-1-phosphatidyl-1D-myo-inositol + CoA. It catalyses the reaction a 1,2-diacyl-sn-glycero-3-phospho-[alpha-D-mannopyranosyl-(1&lt;-&gt;6)-D-myo-inositol] + an acyl-CoA = a 1,2-diacyl-sn-glycero-3-phospho-[alpha-D-6-acyl-mannopyranosyl-(1&lt;-&gt;6)-D-myo-inositol] + CoA. The protein operates within phospholipid metabolism; phosphatidylinositol metabolism. Its function is as follows. Catalyzes the transfer of a palmitoyl moiety from palmitoyl-CoA to the 6-position of the mannose ring linked to the 2-position of myo-inositol in phosphatidyl-myo-inositol monomannoside (PIM1) or dimannoside (PIM2). Essential for growth and survival in axenic cultures and during macrophage infection and in a mouse model of infection. This chain is Phosphatidylinositol mannoside acyltransferase, found in Mycobacterium tuberculosis (strain ATCC 25618 / H37Rv).